Consider the following 397-residue polypeptide: Arginine biosynthesis bifunctional protein ArgJ (397 aa).

Substrate is bound by residues threonine 147, lysine 173, threonine 184, glutamate 270, asparagine 392, and threonine 397. The active-site Nucleophile is threonine 184.

This sequence belongs to the ArgJ family. As to quaternary structure, heterotetramer of two alpha and two beta chains.

It is found in the cytoplasm. The enzyme catalyses N(2)-acetyl-L-ornithine + L-glutamate = N-acetyl-L-glutamate + L-ornithine. It catalyses the reaction L-glutamate + acetyl-CoA = N-acetyl-L-glutamate + CoA + H(+). The protein operates within amino-acid biosynthesis; L-arginine biosynthesis; L-ornithine and N-acetyl-L-glutamate from L-glutamate and N(2)-acetyl-L-ornithine (cyclic): step 1/1. It functions in the pathway amino-acid biosynthesis; L-arginine biosynthesis; N(2)-acetyl-L-ornithine from L-glutamate: step 1/4. Its function is as follows. Catalyzes two activities which are involved in the cyclic version of arginine biosynthesis: the synthesis of N-acetylglutamate from glutamate and acetyl-CoA as the acetyl donor, and of ornithine by transacetylation between N(2)-acetylornithine and glutamate. The chain is Arginine biosynthesis bifunctional protein ArgJ from Streptococcus thermophilus (strain ATCC BAA-250 / LMG 18311).